The sequence spans 129 residues: Protein yippee-like (129 aa).

One can recognise a Yippee domain in the interval 12–109 (KIYSCKHCGT…LERFKITGPD (98 aa)). Zn(2+) contacts are provided by Cys-16, Cys-19, Cys-72, and Cys-75.

It belongs to the yippee family.

The sequence is that of Protein yippee-like from Solanum tuberosum (Potato).